The primary structure comprises 295 residues: 4-hydroxy-tetrahydrodipicolinate synthase (295 aa).

T46 contributes to the pyruvate binding site. Residue Y135 is the Proton donor/acceptor of the active site. The Schiff-base intermediate with substrate role is filled by K164. Position 205 (I205) interacts with pyruvate.

Belongs to the DapA family. Homotetramer; dimer of dimers.

The protein localises to the cytoplasm. The catalysed reaction is L-aspartate 4-semialdehyde + pyruvate = (2S,4S)-4-hydroxy-2,3,4,5-tetrahydrodipicolinate + H2O + H(+). It participates in amino-acid biosynthesis; L-lysine biosynthesis via DAP pathway; (S)-tetrahydrodipicolinate from L-aspartate: step 3/4. In terms of biological role, catalyzes the condensation of (S)-aspartate-beta-semialdehyde [(S)-ASA] and pyruvate to 4-hydroxy-tetrahydrodipicolinate (HTPA). This Wolinella succinogenes (strain ATCC 29543 / DSM 1740 / CCUG 13145 / JCM 31913 / LMG 7466 / NCTC 11488 / FDC 602W) (Vibrio succinogenes) protein is 4-hydroxy-tetrahydrodipicolinate synthase.